The following is an 83-amino-acid chain: Putative defensin-like protein 110 (83 aa).

Positions 1–24 (MAITKKNLIAFVFTILFVISYVHC) are cleaved as a signal peptide. Intrachain disulfides connect C43-C81, C49-C73, C59-C79, and C63-C80.

Belongs to the DEFL family.

Its subcellular location is the secreted. The sequence is that of Putative defensin-like protein 110 from Arabidopsis thaliana (Mouse-ear cress).